The chain runs to 193 residues: Large ribosomal subunit protein uL18 (193 aa).

It belongs to the universal ribosomal protein uL18 family. Part of the 50S ribosomal subunit. Contacts the 5S and 23S rRNAs.

In terms of biological role, this is one of the proteins that bind and probably mediate the attachment of the 5S RNA into the large ribosomal subunit, where it forms part of the central protuberance. The polypeptide is Large ribosomal subunit protein uL18 (Methanosphaera stadtmanae (strain ATCC 43021 / DSM 3091 / JCM 11832 / MCB-3)).